The following is a 946-amino-acid chain: Histone-lysine N-methyltransferase, H3 lysine-79 specific (946 aa).

Over residues 1–18 the composition is skewed to basic and acidic residues; the sequence is MSEADAGARDESPSRTAE. The interval 1-28 is disordered; the sequence is MSEADAGARDESPSRTAEEPAAAMRIKE. Residues 54–369 form the DOT1 domain; sequence QGKTLRLPGN…KLIKYYEDQR (316 aa). S-adenosyl-L-methionine-binding positions include 173–176, 196–205, Glu-223, and 259–260; these read YGET, FVDLGSGIGQ, and DF. A compositionally biased stretch (basic and acidic residues) spans 368–409; the sequence is QRRRQEVKSSREGSEISDGRDMGLKKRKSQRESSVHPDKLQK. Disordered stretches follow at residues 368 to 577 and 849 to 905; these read QRRR…HGGG and PTAS…GATE. Residues 410 to 422 are compositionally biased toward polar residues; that stretch reads TEQAAASSHQSPK. Positions 464–484 are enriched in basic and acidic residues; it reads GKDREKEKEKKKNKIYEEKKV. Low complexity-rich tracts occupy residues 491–502, 512–528, and 855–864; these read KSSSSRYSSETP, NSISHSSDVIRPSQPKA, and SKVSPSSSSS. The segment covering 880–903 has biased composition (gly residues); sequence GAGGGGKRGTSGGRKSDGGGGGGA.

This sequence belongs to the class I-like SAM-binding methyltransferase superfamily. DOT1 family. In terms of assembly, interacts with zfp-1 (via C-terminus) to form a heterodimer known as the zfp-1-dot-1.1 complex or DotCom complex.

The protein localises to the nucleus. Its subcellular location is the chromosome. The catalysed reaction is L-lysyl(79)-[histone H3] + 3 S-adenosyl-L-methionine = N(6),N(6),N(6)-trimethyl-L-lysyl(79)-[histone H3] + 3 S-adenosyl-L-homocysteine + 3 H(+). Its function is as follows. Histone methyltransferase, which in complex with zfp-1, methylates 'Lys-79' of histone H3 to activate transcription. During stress, the zfp-1-dot-1.1 complex also plays a role in the deubiquitination of histone H2B sites, which negatively modulates the RNA polymerase II-induced transcription of highly expressed genes. Involved in controlling tissue-specific gene expression, particularly in the epidermis. The chain is Histone-lysine N-methyltransferase, H3 lysine-79 specific from Caenorhabditis elegans.